Consider the following 88-residue polypeptide: Small ribosomal subunit protein uS15c (88 aa).

The protein belongs to the universal ribosomal protein uS15 family. Part of the 30S ribosomal subunit.

It localises to the plastid. The protein resides in the chloroplast. This Aethionema grandiflorum (Persian stone-cress) protein is Small ribosomal subunit protein uS15c (rps15).